We begin with the raw amino-acid sequence, 240 residues long: Insulin-like growth factor-binding protein 3 receptor (240 aa).

The N-terminal stretch at 1-38 (MGSCQAGHNLHLCLAHHPPLVCATLILLLLGLSGLGLG) is a signal peptide. At 39–204 (GFLLTHTTGL…SEELALCGSR (166 aa)) the chain is on the extracellular side. An N-linked (GlcNAc...) asparagine glycan is attached at asparagine 167. A helical transmembrane segment spans residues 205 to 225 (VLGLGFFLVLLCGLLCCTTAV). Residues 226–240 (CFHPRPEFHWSRTRL) lie on the Cytoplasmic side of the membrane.

Interacts with IGFBP3. Interacts with CASP8.

The protein localises to the cell membrane. Its function is as follows. Cell death receptor specific for IGFBP3, may mediate caspase-8-dependent apoptosis upon ligand binding. The chain is Insulin-like growth factor-binding protein 3 receptor (Tmem219) from Mus musculus (Mouse).